The sequence spans 151 residues: Transcriptional repressor NrdR (151 aa).

Residues 3 to 34 fold into a zinc finger; sequence CPYCGYIEDRVIDSRPTDEGSAIRRRRECSKC. The ATP-cone domain occupies 49-139; it reads IMVIKKDKSR…VYRQFKDINT (91 aa).

This sequence belongs to the NrdR family. Zn(2+) is required as a cofactor.

Negatively regulates transcription of bacterial ribonucleotide reductase nrd genes and operons by binding to NrdR-boxes. The polypeptide is Transcriptional repressor NrdR (Acetivibrio thermocellus (strain ATCC 27405 / DSM 1237 / JCM 9322 / NBRC 103400 / NCIMB 10682 / NRRL B-4536 / VPI 7372) (Clostridium thermocellum)).